Here is a 325-residue protein sequence, read N- to C-terminus: Serine/threonine-protein kinase CtkA (325 aa).

Residues 21–24, K37, Q72, and 88–90 each bind ATP; these read NGNK and KDF. Positions 160 and 179 each coordinate Mg(2+). Residue D179 participates in ATP binding. A disordered region spans residues 296–325; it reads QHKQAHSNPYDNADDLDNSNEYTPTPKRRR.

Post-translationally, autophosphorylates on either Thr-3 or Thr-7.

The protein localises to the secreted. It is found in the host cytoplasm. Its subcellular location is the host cytosol. The protein resides in the host nucleus. The enzyme catalyses L-seryl-[protein] + ATP = O-phospho-L-seryl-[protein] + ADP + H(+). The catalysed reaction is L-threonyl-[protein] + ATP = O-phospho-L-threonyl-[protein] + ADP + H(+). Functionally, virulence factor acting as a pro-inflammatory protein that induces the secretion of the pro-inflammatory cytokines TNF-alpha (tumor necrosis factor-alpha) and IL-8 (interleukin-8) from human macrophages, as well as enhanced translocation of the transcription factor NF-kappa-B complex in macrophages. Is a kinase capable of autophosphorylating itself at a threonine residue near the N-terminus. Also leads to enhanced phosphorylation of the NF-kappa-B p65 subunit (RELA) at 'Ser-276' in human epithelial cancer cells; its kinase activity is required for this enhanced phosphorylation that up-regulates NF-kappa-B activity, but it does not directly phosphorylate this protein. Thus, the kinase activity of CtkA may play an important role in the induction of host inflammatory responses during H.pylori infection. In Helicobacter pylori (strain J99 / ATCC 700824) (Campylobacter pylori J99), this protein is Serine/threonine-protein kinase CtkA (ctkA).